Consider the following 1383-residue polypeptide: Putative autophagy-related protein 11 (1383 aa).

2 coiled-coil regions span residues 16 to 49 (DKNN…YELN) and 117 to 324 (NLFL…QNKE). Basic and acidic residues-rich tracts occupy residues 1151–1224 (EEEK…EDRK) and 1233–1249 (HSSD…KTKE). The tract at residues 1151 to 1249 (EEEKKKNEEE…KYNKKEKTKE (99 aa)) is disordered.

It belongs to the ATG11 family.

Functionally, involved in cytoplasm to vacuole transport (Cvt), pexophagy, mitophagy and nucleophagy. Works as scaffold proteins that recruit ATG proteins to the pre-autophagosome (PAS), the site of vesicle/autophagosome formation. This chain is Putative autophagy-related protein 11, found in Plasmodium falciparum (isolate 3D7).